The chain runs to 279 residues: Phosphatidylglycerol--prolipoprotein diacylglyceryl transferase (279 aa).

7 helical membrane-spanning segments follow: residues 14 to 34 (IAFS…ACAI), 62 to 82 (YFLW…ILIY), 106 to 126 (FVGI…IASY), 136 to 156 (LLIY…FGRI), 190 to 210 (PSQL…VMWA), 218 to 238 (GLLI…AEFY), and 252 to 272 (LSMG…ILLY). Arg155 is a binding site for a 1,2-diacyl-sn-glycero-3-phospho-(1'-sn-glycerol).

Belongs to the Lgt family.

The protein resides in the cell inner membrane. It carries out the reaction L-cysteinyl-[prolipoprotein] + a 1,2-diacyl-sn-glycero-3-phospho-(1'-sn-glycerol) = an S-1,2-diacyl-sn-glyceryl-L-cysteinyl-[prolipoprotein] + sn-glycerol 1-phosphate + H(+). It participates in protein modification; lipoprotein biosynthesis (diacylglyceryl transfer). In terms of biological role, catalyzes the transfer of the diacylglyceryl group from phosphatidylglycerol to the sulfhydryl group of the N-terminal cysteine of a prolipoprotein, the first step in the formation of mature lipoproteins. This Helicobacter pylori (strain HPAG1) protein is Phosphatidylglycerol--prolipoprotein diacylglyceryl transferase.